The following is a 186-amino-acid chain: Secreted chorismate mutase (186 aa).

The first 30 residues, 1–30, serve as a signal peptide directing secretion; sequence MQPTHTLTRLTVIGKLIIASSFFLSLAVQA. The region spanning 31–107 is the Chorismate mutase domain; that stretch reads QQCGQTAPLI…AAKAIQYRYR (77 aa). Residues C33 and C148 are joined by a disulfide bond. Substrate-binding positions include R43, K54, D63, 99–103, and R127; that span reads AKAIQ.

As to quaternary structure, homodimer.

The protein localises to the periplasm. It carries out the reaction chorismate = prephenate. Its pathway is metabolic intermediate biosynthesis; prephenate biosynthesis; prephenate from chorismate: step 1/1. Functionally, catalyzes the Claisen rearrangement of chorismate to prephenate. May play some role in the pathogenicity. This Yersinia pestis protein is Secreted chorismate mutase (pheA2).